A 400-amino-acid polypeptide reads, in one-letter code: Phosphoglycerate kinase (400 aa).

Substrate-binding positions include 21–23, R36, 59–62, R119, and R160; these read DFN and HLGR. ATP-binding positions include K211, E329, and 356-359; that span reads GGDS.

The protein belongs to the phosphoglycerate kinase family. As to quaternary structure, monomer.

Its subcellular location is the cytoplasm. The enzyme catalyses (2R)-3-phosphoglycerate + ATP = (2R)-3-phospho-glyceroyl phosphate + ADP. It participates in carbohydrate degradation; glycolysis; pyruvate from D-glyceraldehyde 3-phosphate: step 2/5. In Levilactobacillus brevis (strain ATCC 367 / BCRC 12310 / CIP 105137 / JCM 1170 / LMG 11437 / NCIMB 947 / NCTC 947) (Lactobacillus brevis), this protein is Phosphoglycerate kinase.